The following is an 823-amino-acid chain: Leucine--tRNA ligase (823 aa).

A 'HIGH' region motif is present at residues 41 to 51 (PYPSGTLHVGH). Residues 580 to 584 (KMSKS) carry the 'KMSKS' region motif. An ATP-binding site is contributed by Lys583.

This sequence belongs to the class-I aminoacyl-tRNA synthetase family.

Its subcellular location is the cytoplasm. The enzyme catalyses tRNA(Leu) + L-leucine + ATP = L-leucyl-tRNA(Leu) + AMP + diphosphate. The chain is Leucine--tRNA ligase from Thermosipho melanesiensis (strain DSM 12029 / CIP 104789 / BI429).